The following is a 196-amino-acid chain: Guanylate kinase (196 aa).

Positions 8–191 constitute a Guanylate kinase-like domain; it reads GRLIVLTGPT…AAADLWSVIA (184 aa). Residue 15–22 participates in ATP binding; sequence GPTAVGKG.

It belongs to the guanylate kinase family.

It localises to the cytoplasm. The catalysed reaction is GMP + ATP = GDP + ADP. Its function is as follows. Essential for recycling GMP and indirectly, cGMP. In Bifidobacterium longum (strain NCC 2705), this protein is Guanylate kinase.